We begin with the raw amino-acid sequence, 225 residues long: NAD(P)H-quinone oxidoreductase subunit K, chloroplastic (225 aa).

[4Fe-4S] cluster is bound by residues cysteine 43, cysteine 44, cysteine 108, and cysteine 139.

The protein belongs to the complex I 20 kDa subunit family. NDH is composed of at least 16 different subunits, 5 of which are encoded in the nucleus. The cofactor is [4Fe-4S] cluster.

The protein localises to the plastid. Its subcellular location is the chloroplast thylakoid membrane. It carries out the reaction a plastoquinone + NADH + (n+1) H(+)(in) = a plastoquinol + NAD(+) + n H(+)(out). The catalysed reaction is a plastoquinone + NADPH + (n+1) H(+)(in) = a plastoquinol + NADP(+) + n H(+)(out). NDH shuttles electrons from NAD(P)H:plastoquinone, via FMN and iron-sulfur (Fe-S) centers, to quinones in the photosynthetic chain and possibly in a chloroplast respiratory chain. The immediate electron acceptor for the enzyme in this species is believed to be plastoquinone. Couples the redox reaction to proton translocation, and thus conserves the redox energy in a proton gradient. The polypeptide is NAD(P)H-quinone oxidoreductase subunit K, chloroplastic (Agrostis stolonifera (Creeping bentgrass)).